The following is a 118-amino-acid chain: Small ribosomal subunit protein uS13 (118 aa).

Positions 94–118 are disordered; the sequence is SLPVRGQRTKTNARTRKGPRKPIKK.

Belongs to the universal ribosomal protein uS13 family. As to quaternary structure, part of the 30S ribosomal subunit. Forms a loose heterodimer with protein S19. Forms two bridges to the 50S subunit in the 70S ribosome.

Functionally, located at the top of the head of the 30S subunit, it contacts several helices of the 16S rRNA. In the 70S ribosome it contacts the 23S rRNA (bridge B1a) and protein L5 of the 50S subunit (bridge B1b), connecting the 2 subunits; these bridges are implicated in subunit movement. Contacts the tRNAs in the A and P-sites. This Haemophilus influenzae (strain 86-028NP) protein is Small ribosomal subunit protein uS13.